We begin with the raw amino-acid sequence, 456 residues long: tRNA modification GTPase MnmE (456 aa).

Arg-25, Glu-82, and Lys-121 together coordinate (6S)-5-formyl-5,6,7,8-tetrahydrofolate. A TrmE-type G domain is found at 217–379 (GIKVVIIGKP…LLDEIVKIAG (163 aa)). Asn-227 contributes to the K(+) binding site. Residues 227-232 (NAGKSS), 246-252 (TDIAGTT), and 271-274 (DTAG) each bind GTP. Residue Ser-231 coordinates Mg(2+). K(+) contacts are provided by Thr-246, Ile-248, and Thr-251. Mg(2+) is bound at residue Thr-252. Lys-456 contributes to the (6S)-5-formyl-5,6,7,8-tetrahydrofolate binding site.

This sequence belongs to the TRAFAC class TrmE-Era-EngA-EngB-Septin-like GTPase superfamily. TrmE GTPase family. Homodimer. Heterotetramer of two MnmE and two MnmG subunits. K(+) serves as cofactor.

The protein resides in the cytoplasm. Exhibits a very high intrinsic GTPase hydrolysis rate. Involved in the addition of a carboxymethylaminomethyl (cmnm) group at the wobble position (U34) of certain tRNAs, forming tRNA-cmnm(5)s(2)U34. The protein is tRNA modification GTPase MnmE of Endomicrobium trichonymphae.